Here is a 228-residue protein sequence, read N- to C-terminus: Aquaporin Z 1 (228 aa).

Transmembrane regions (helical) follow at residues 9–29 and 34–54; these read FLGT…AAAF and IGLL…AYAV. The NPA 1 signature appears at 63-65; the sequence is NPA. The next 3 helical transmembrane spans lie at 82–102, 129–149, and 156–176; these read VGYI…LYVI, LTAA…IILG, and PVGF…LVSI. An NPA 2 motif is present at residues 184 to 186; sequence NPA. The helical transmembrane segment at 204 to 224 threads the bilayer; it reads WLFWVAPLIGAVIAGIVWKIV.

This sequence belongs to the MIP/aquaporin (TC 1.A.8) family. Homotetramer.

It is found in the cell inner membrane. The enzyme catalyses H2O(in) = H2O(out). Channel that permits osmotically driven movement of water in both directions. It is involved in the osmoregulation and in the maintenance of cell turgor during volume expansion in rapidly growing cells. It mediates rapid entry or exit of water in response to abrupt changes in osmolarity. This chain is Aquaporin Z 1, found in Rhizobium meliloti (strain 1021) (Ensifer meliloti).